A 306-amino-acid polypeptide reads, in one-letter code: Glutamyl-Q tRNA(Asp) synthetase (306 aa).

L-glutamate-binding positions include 4–8 and Glu-40; that span reads RYAPS. The 'HIGH' region signature appears at 7–17; it reads PSPSGDLHFGN. Zn(2+) is bound by residues Cys-92, Cys-94, Tyr-113, and Cys-117. Tyr-180 and Arg-198 together coordinate L-glutamate. The short motif at 236 to 240 is the 'KMSKS' region element; it reads RLAKR. Lys-239 is an ATP binding site.

Belongs to the class-I aminoacyl-tRNA synthetase family. GluQ subfamily. Zn(2+) is required as a cofactor.

Catalyzes the tRNA-independent activation of glutamate in presence of ATP and the subsequent transfer of glutamate onto a tRNA(Asp). Glutamate is transferred on the 2-amino-5-(4,5-dihydroxy-2-cyclopenten-1-yl) moiety of the queuosine in the wobble position of the QUC anticodon. This chain is Glutamyl-Q tRNA(Asp) synthetase, found in Corynebacterium efficiens (strain DSM 44549 / YS-314 / AJ 12310 / JCM 11189 / NBRC 100395).